A 197-amino-acid polypeptide reads, in one-letter code: Protein RmlC homolog (197 aa).

The Proton acceptor role is filled by H76. Residue Y140 is the Proton donor of the active site.

Functionally, could catalyze a 3,5-epimerization. The protein is Protein RmlC homolog (rfbC) of Streptococcus pyogenes serotype M6 (strain ATCC BAA-946 / MGAS10394).